Reading from the N-terminus, the 553-residue chain is Arginine--tRNA ligase (553 aa).

A 'HIGH' region motif is present at residues 130-140 (ANPTGDLHIGH).

It belongs to the class-I aminoacyl-tRNA synthetase family. As to quaternary structure, monomer.

It is found in the cytoplasm. The enzyme catalyses tRNA(Arg) + L-arginine + ATP = L-arginyl-tRNA(Arg) + AMP + diphosphate. The polypeptide is Arginine--tRNA ligase (Staphylococcus epidermidis (strain ATCC 12228 / FDA PCI 1200)).